Reading from the N-terminus, the 420-residue chain is Exodeoxyribonuclease 7 large subunit (420 aa).

This sequence belongs to the XseA family. In terms of assembly, heterooligomer composed of large and small subunits.

The protein resides in the cytoplasm. The catalysed reaction is Exonucleolytic cleavage in either 5'- to 3'- or 3'- to 5'-direction to yield nucleoside 5'-phosphates.. Its function is as follows. Bidirectionally degrades single-stranded DNA into large acid-insoluble oligonucleotides, which are then degraded further into small acid-soluble oligonucleotides. This Helicobacter pylori (strain P12) protein is Exodeoxyribonuclease 7 large subunit.